Reading from the N-terminus, the 134-residue chain is MSWQAYVDDHLMCDIEGHEGHRLTAAAIVGHDGSVWAQSATFPQFKPEEMNGIMTDFNEPGHLAPTGLHLGGTKYMVIQGEAGAVIRGKKGSGGITIKKTGQALVCGIYEEPVTPGQCNMVVERLGDYLLEQGL.

Cys13 and Cys118 form a disulfide bridge. The short motif at 84–100 (AVIRGKKGSGGITIKKT) is the Involved in PIP2 interaction element. Thr114 is subject to Phosphothreonine.

This sequence belongs to the profilin family. Occurs in many kinds of cells as a complex with monomeric actin in a 1:1 ratio. In terms of processing, phosphorylated by MAP kinases.

It localises to the cytoplasm. The protein resides in the cytoskeleton. Binds to actin and affects the structure of the cytoskeleton. At high concentrations, profilin prevents the polymerization of actin, whereas it enhances it at low concentrations. In Olea europaea (Common olive), this protein is Profilin-3.